Here is a 459-residue protein sequence, read N- to C-terminus: Vanillin aminotransferase (459 aa).

Pyridoxal 5'-phosphate-binding positions include 115–116 (GS) and D255. N6-(pyridoxal phosphate)lysine is present on K284. Pyridoxal 5'-phosphate is bound at residue 320 to 321 (FT). The stretch at 430–457 (LEELDELIRIYGKALKDTEKRVEELKSQ) forms a coiled coil.

It belongs to the class-III pyridoxal-phosphate-dependent aminotransferase family. In terms of tissue distribution, confined to the placenta of green fruits at high levels. Barely detectable in the pericarp and seeds as well as in the placenta of mature fruits.

The catalysed reaction is vanillin + L-alanine = vanillylamine + pyruvate. Its pathway is aromatic compound metabolism; phenylpropanoid biosynthesis. Involved in the biosynthesis of capsaicinoids natural products, pungent alkaloids synthesized from phenylpropanoid intermediates in the placental tissue of chili pepper fruit acting as repellant on herbivorous mammals and conferring spiciness to hot peppers. Can transfer an amine from vanillylamine to pyruvate forming vanillin and L-alanine. This chain is Vanillin aminotransferase, found in Capsicum annuum (Capsicum pepper).